A 316-amino-acid chain; its full sequence is tRNA dimethylallyltransferase (316 aa).

17 to 24 (GPTASGKT) contributes to the ATP binding site. 19 to 24 (TASGKT) contacts substrate. Interaction with substrate tRNA stretches follow at residues 42–45 (DSAL), 166–170 (QRLSR), and 247–252 (RCVGYR).

It belongs to the IPP transferase family. In terms of assembly, monomer. Requires Mg(2+) as cofactor.

It catalyses the reaction adenosine(37) in tRNA + dimethylallyl diphosphate = N(6)-dimethylallyladenosine(37) in tRNA + diphosphate. Its function is as follows. Catalyzes the transfer of a dimethylallyl group onto the adenine at position 37 in tRNAs that read codons beginning with uridine, leading to the formation of N6-(dimethylallyl)adenosine (i(6)A). This is tRNA dimethylallyltransferase from Salmonella typhi.